Here is a 177-residue protein sequence, read N- to C-terminus: Small ribosomal subunit protein uS5 (177 aa).

An S5 DRBM domain is found at 14 to 77 (LQEKLITVNR…EKARHNMIDI (64 aa)).

The protein belongs to the universal ribosomal protein uS5 family. Part of the 30S ribosomal subunit. Contacts proteins S4 and S8.

Its function is as follows. With S4 and S12 plays an important role in translational accuracy. Functionally, located at the back of the 30S subunit body where it stabilizes the conformation of the head with respect to the body. The sequence is that of Small ribosomal subunit protein uS5 from Blochmanniella floridana.